A 182-amino-acid chain; its full sequence is Protein canopy homolog 2 (182 aa).

Positions 1-20 (MKGWGWLALLLGALLGTAWA) are cleaved as a signal peptide. Residues 24 to 175 (QDLHCGACRA…KRTDLCDHAL (152 aa)) form the Saposin B-type domain. 3 disulfide bridges follow: C28/C171, C31/C164, and C86/C137. The residue at position 115 (S115) is a Phosphoserine. The short motif at 179–182 (HDEL) is the Prevents secretion from ER element.

This sequence belongs to the canopy family. Interacts with MYLIP/MIR. In terms of tissue distribution, expressed in different tissues. Highest levels are detected in adult placenta, liver and pancreas.

The protein resides in the endoplasmic reticulum. Positive regulator of neurite outgrowth by stabilizing myosin regulatory light chain (MRLC). It prevents MIR-mediated MRLC ubiquitination and its subsequent proteasomal degradation. This chain is Protein canopy homolog 2 (CNPY2), found in Homo sapiens (Human).